The chain runs to 366 residues: Aminomethyltransferase (366 aa).

It belongs to the GcvT family. In terms of assembly, the glycine cleavage system is composed of four proteins: P, T, L and H.

It carries out the reaction N(6)-[(R)-S(8)-aminomethyldihydrolipoyl]-L-lysyl-[protein] + (6S)-5,6,7,8-tetrahydrofolate = N(6)-[(R)-dihydrolipoyl]-L-lysyl-[protein] + (6R)-5,10-methylene-5,6,7,8-tetrahydrofolate + NH4(+). In terms of biological role, the glycine cleavage system catalyzes the degradation of glycine. The polypeptide is Aminomethyltransferase (Bacillus mycoides (strain KBAB4) (Bacillus weihenstephanensis)).